Consider the following 201-residue polypeptide: Holliday junction branch migration complex subunit RuvA (201 aa).

A domain I region spans residues 1–64 (MFAYIKGVLA…EFSHTLYGFL (64 aa)). Residues 65–143 (SYQERDIFEI…AIGHLDTSDH (79 aa)) are domain II. Positions 144-153 (IEPLTQDPKS) are flexible linker. The tract at residues 153–201 (SKSVQDAMLALINLGYNQTTAQKAIKQGMKELPEEIDLAQLITVALKHV) is domain III.

This sequence belongs to the RuvA family. As to quaternary structure, homotetramer. Forms an RuvA(8)-RuvB(12)-Holliday junction (HJ) complex. HJ DNA is sandwiched between 2 RuvA tetramers; dsDNA enters through RuvA and exits via RuvB. An RuvB hexamer assembles on each DNA strand where it exits the tetramer. Each RuvB hexamer is contacted by two RuvA subunits (via domain III) on 2 adjacent RuvB subunits; this complex drives branch migration. In the full resolvosome a probable DNA-RuvA(4)-RuvB(12)-RuvC(2) complex forms which resolves the HJ.

It localises to the cytoplasm. Functionally, the RuvA-RuvB-RuvC complex processes Holliday junction (HJ) DNA during genetic recombination and DNA repair, while the RuvA-RuvB complex plays an important role in the rescue of blocked DNA replication forks via replication fork reversal (RFR). RuvA specifically binds to HJ cruciform DNA, conferring on it an open structure. The RuvB hexamer acts as an ATP-dependent pump, pulling dsDNA into and through the RuvAB complex. HJ branch migration allows RuvC to scan DNA until it finds its consensus sequence, where it cleaves and resolves the cruciform DNA. This chain is Holliday junction branch migration complex subunit RuvA, found in Protochlamydia amoebophila (strain UWE25).